A 642-amino-acid polypeptide reads, in one-letter code: Poly(A) polymerase beta (642 aa).

Residues Phe101 to Ser103, Thr110, Asp114 to Asp116, Asp168, Lys229, Tyr238, and Gly247 to Val248 contribute to the ATP site. Residues Asp114, Asp116, and Asp168 each contribute to the Mg(2+) site. Disordered regions lie at residues Ser530–Gln553 and Leu620–Val642. The span at Leu620–Pro636 shows a compositional bias: polar residues.

The protein belongs to the poly(A) polymerase family. In terms of assembly, interacts with GSG1. Mg(2+) serves as cofactor. The cofactor is Mn(2+). As to expression, testis specific.

The protein resides in the cytoplasm. The protein localises to the nucleus. It catalyses the reaction RNA(n) + ATP = RNA(n)-3'-adenine ribonucleotide + diphosphate. The chain is Poly(A) polymerase beta from Mus musculus (Mouse).